A 468-amino-acid chain; its full sequence is Envelope glycoprotein C (468 aa).

Residues 1 to 30 (MWLPNLVRFVAVAYLICAGAILTYASGASA) form the signal peptide. Low complexity predominate over residues 31–50 (SSSQSTPATPTHTTPNLTTA). The interval 31–73 (SSSQSTPATPTHTTPNLTTAHGAGSDNTTNANGTESTHSHETT) is disordered. The Virion surface portion of the chain corresponds to 31 to 431 (SSSQSTPATP…IVEDRPVLTS (401 aa)). Residues N46, N57, N62, N92, N100, N131, N203, N208, and N269 are each glycosylated (N-linked (GlcNAc...) asparagine; by host). Cysteines 76 and 93 form a disulfide. 2 Ig-like domains span residues 220 to 311 (PLLD…DEVS) and 321 to 416 (PSVF…DTVV). 3 disulfide bridges follow: C239–C301, C340–C399, and C344–C373. The chain crosses the membrane as a helical span at residues 432–451 (IIAVTCGAAALALVVLITAV). Over 452-468 (CFYCSKPSQAPYKKSDF) the chain is Cytoplasmic.

This sequence belongs to the herpesviridae glycoprotein C family. Interacts with host complement component C3; this interaction inhibits host immune response by disregulating complement cascade.

It localises to the virion membrane. Essential for the initial attachment to heparan sulfate moieties of the host cell surface proteoglycans. Also plays a role in host immune evasion by inhibiting the host complement cascade activation. The polypeptide is Envelope glycoprotein C (gC) (Equus caballus (Horse)).